The chain runs to 588 residues: Catechol oxidase B, chloroplastic (588 aa).

Residues 1–88 constitute a chloroplast transit peptide; it reads SSSSTTTIPL…AANLAPLASA (88 aa). 2 cysteine pairs are disulfide-bonded: C99-C115 and C114-C181. The Cu cation site is built by H180, H198, H207, H329, H333, and H364. A cross-link (2'-(S-cysteinyl)-histidine (Cys-His)) is located at residues 184 to 198; sequence CNGAYKVGGKELQVH.

Belongs to the tyrosinase family. It depends on Cu(2+) as a cofactor.

Its subcellular location is the plastid. The protein localises to the chloroplast thylakoid lumen. It catalyses the reaction 2 catechol + O2 = 2 1,2-benzoquinone + 2 H2O. Functionally, catalyzes the oxidation of mono- and o-diphenols to o-diquinones. This is Catechol oxidase B, chloroplastic from Solanum tuberosum (Potato).